The primary structure comprises 310 residues: tRNA uridine(34) hydroxylase (310 aa).

Positions 127 to 225 (KDKDTIVIDT…YLEDISKEES (99 aa)) constitute a Rhodanese domain. Catalysis depends on cysteine 185, which acts as the Cysteine persulfide intermediate.

The protein belongs to the TrhO family.

The catalysed reaction is uridine(34) in tRNA + AH2 + O2 = 5-hydroxyuridine(34) in tRNA + A + H2O. Catalyzes oxygen-dependent 5-hydroxyuridine (ho5U) modification at position 34 in tRNAs. The polypeptide is tRNA uridine(34) hydroxylase (Prochlorococcus marinus (strain MIT 9515)).